Here is a 318-residue protein sequence, read N- to C-terminus: Biotin synthase (318 aa).

One can recognise a Radical SAM core domain in the interval 44–273 (LCGNKFDLCT…TVQIRLAGGR (230 aa)). [4Fe-4S] cluster contacts are provided by C62, C66, and C69. The [2Fe-2S] cluster site is built by S106, C138, C198, and R268.

This sequence belongs to the radical SAM superfamily. Biotin synthase family. Homodimer. It depends on [4Fe-4S] cluster as a cofactor. [2Fe-2S] cluster is required as a cofactor.

It carries out the reaction (4R,5S)-dethiobiotin + (sulfur carrier)-SH + 2 reduced [2Fe-2S]-[ferredoxin] + 2 S-adenosyl-L-methionine = (sulfur carrier)-H + biotin + 2 5'-deoxyadenosine + 2 L-methionine + 2 oxidized [2Fe-2S]-[ferredoxin]. It functions in the pathway cofactor biosynthesis; biotin biosynthesis; biotin from 7,8-diaminononanoate: step 2/2. In terms of biological role, catalyzes the conversion of dethiobiotin (DTB) to biotin by the insertion of a sulfur atom into dethiobiotin via a radical-based mechanism. This is Biotin synthase from Clostridium botulinum (strain Langeland / NCTC 10281 / Type F).